We begin with the raw amino-acid sequence, 389 residues long: Protein IQ-domain 26 (389 aa).

IQ domains are found at residues 106–134 (ERWA…GLVK) and 135–157 (LQAL…SMQA). The tract at residues 137-151 (ALVRGYLVRKRAAET) is calmodulin-binding. The tract at residues 347-374 (SVSGVRMVQPQPQPQTQTQQQKRSPCSY) is disordered.

This sequence belongs to the IQD family. As to quaternary structure, binds to multiple calmodulin (CaM) in the presence of Ca(2+) and CaM-like proteins.

Its subcellular location is the cell membrane. The protein localises to the cytoplasm. It localises to the cytoskeleton. In terms of biological role, may be involved in cooperative interactions with calmodulins or calmodulin-like proteins. Recruits calmodulin proteins to microtubules, thus being a potential scaffold in cellular signaling and trafficking. May associate with nucleic acids and regulate gene expression at the transcriptional or post-transcriptional level. This Arabidopsis thaliana (Mouse-ear cress) protein is Protein IQ-domain 26.